A 148-amino-acid polypeptide reads, in one-letter code: Lysozyme C (148 aa).

The first 18 residues, 1 to 18 (MKVLILLGLVLLSVMVQG), serve as a signal peptide directing secretion. Residues 19–148 (KVFERCELAR…VSQYIQGCGV (130 aa)) form the C-type lysozyme domain. 4 disulfides stabilise this stretch: cysteine 24-cysteine 146, cysteine 48-cysteine 134, cysteine 83-cysteine 99, and cysteine 95-cysteine 113. Residues glutamate 53 and aspartate 71 contribute to the active site.

This sequence belongs to the glycosyl hydrolase 22 family. Monomer.

The protein resides in the secreted. It carries out the reaction Hydrolysis of (1-&gt;4)-beta-linkages between N-acetylmuramic acid and N-acetyl-D-glucosamine residues in a peptidoglycan and between N-acetyl-D-glucosamine residues in chitodextrins.. Lysozymes have primarily a bacteriolytic function; those in tissues and body fluids are associated with the monocyte-macrophage system and enhance the activity of immunoagents. This chain is Lysozyme C (LYZ), found in Saguinus oedipus (Cotton-top tamarin).